Reading from the N-terminus, the 700-residue chain is ABC transporter B family member 26, chloroplastic (700 aa).

A chloroplast-targeting transit peptide spans M1–N59. 3 helical membrane-spanning segments follow: residues W137–P157, L182–I202, and L268–I288. In terms of domain architecture, ABC transmembrane type-1 spans I139–Q421. One can recognise an ABC transporter domain in the interval I455 to R694. ATP is bound at residue G490 to S497.

Belongs to the ABC transporter superfamily. ABCB family. Multidrug resistance exporter (TC 3.A.1.201) subfamily.

Its subcellular location is the plastid. The protein resides in the chloroplast membrane. The protein is ABC transporter B family member 26, chloroplastic (ABCB26) of Arabidopsis thaliana (Mouse-ear cress).